A 312-amino-acid chain; its full sequence is Taste receptor type 2 member 62 (312 aa).

Over 1–4 the chain is Extracellular; that stretch reads MPSL. A helical membrane pass occupies residues 5–27; sequence PTLIFIAIFCLESLAAMLQNGFL. The Cytoplasmic portion of the chain corresponds to 28 to 39; that stretch reads VTMLGREWVRCR. A helical transmembrane segment spans residues 40–62; the sequence is MLSTSDMIVACLAASRFCLHGVA. At 63 to 81 the chain is on the extracellular side; sequence MANNLLASLDFSRAVPYMN. A helical membrane pass occupies residues 82-104; the sequence is IFWDLFNALTLWFTALLAAFYCV. Topologically, residues 105–127 are cytoplasmic; that stretch reads KISSFSHPTFAWLKWRISRLVPK. Residues 128–150 form a helical membrane-spanning segment; the sequence is LIKGSLIICGLEVISSATGNILF. The Extracellular segment spans residues 151–182; sequence GQRKVSLSSYRNETLVYRVQASFQLYFFLYDG. Asn162 is a glycosylation site (N-linked (GlcNAc...) asparagine). Residues 183-205 form a helical membrane-spanning segment; it reads FVWSIPFLLFLVSTVLLIVSLCW. At 206–231 the chain is on the cytoplasmic side; the sequence is QLGQMRDLRPGPCDPSTQAYTMALKS. Residues 232-254 traverse the membrane as a helical segment; sequence LTFSLIFCTLYFLSLFASALKII. Over 255–258 the chain is Extracellular; that stretch reads NFQN. Residues 259–281 traverse the membrane as a helical segment; it reads HWHWAWEVLIYANICLHSTVLVL. Residues 282–312 lie on the Cytoplasmic side of the membrane; sequence RSPKLKKGLKTWPQLQCPCDAGSQGFGRCWP.

This sequence belongs to the G-protein coupled receptor T2R family.

The protein localises to the membrane. Receptor that may play a role in the perception of bitterness and is gustducin-linked. May play a role in sensing the chemical composition of the gastrointestinal content. The activity of this receptor may stimulate alpha gustducin, mediate PLC-beta-2 activation and lead to the gating of TRPM5. This Pan paniscus (Pygmy chimpanzee) protein is Taste receptor type 2 member 62 (TAS2R62).